A 1043-amino-acid polypeptide reads, in one-letter code: Integrator complex subunit 3 (1043 aa).

Residue M1 is modified to N-acetylmethionine. 3 positions are modified to phosphoserine: S502, S537, and S995. Residues 977–1043 (YEDSSTKPPK…GSSAVGSDSD (67 aa)) are disordered. The span at 1008 to 1022 (AEEESGSSSASEEED) shows a compositional bias: acidic residues.

It belongs to the Integrator subunit 3 family. In terms of assembly, component of the Integrator complex, composed of core subunits INTS1, INTS2, INTS3, INTS4, INTS5, INTS6, INTS7, INTS8, INTS9/RC74, INTS10, INTS11/CPSF3L, INTS12, INTS13, INTS14 and INTS15. The core complex associates with protein phosphatase 2A subunits PPP2CA and PPP2R1A, to form the Integrator-PP2A (INTAC) complex. Component of the SOSS complex, composed of SOSS-B (SOSS-B1/NABP2 or SOSS-B2/NABP1), SOSS-A/INTS3 and SOSS-C/INIP. SOSS complexes containing SOSS-B1/NABP2 are more abundant than complexes containing SOSS-B2/NABP1. Interacts with SOSS-B1/NABP2, SOSS-B2/NABP1 and SOSS-C/INIP; the interaction is direct. Interacts with NBN/NBS1.

It is found in the nucleus. The protein localises to the cytoplasm. Its function is as follows. Component of the integrator complex, a multiprotein complex that terminates RNA polymerase II (Pol II) transcription in the promoter-proximal region of genes. The integrator complex provides a quality checkpoint during transcription elongation by driving premature transcription termination of transcripts that are unfavorably configured for transcriptional elongation: the complex terminates transcription by (1) catalyzing dephosphorylation of the C-terminal domain (CTD) of Pol II subunit POLR2A/RPB1 and SUPT5H/SPT5, (2) degrading the exiting nascent RNA transcript via endonuclease activity and (3) promoting the release of Pol II from bound DNA. The integrator complex is also involved in terminating the synthesis of non-coding Pol II transcripts, such as enhancer RNAs (eRNAs), small nuclear RNAs (snRNAs), telomerase RNAs and long non-coding RNAs (lncRNAs). Within the integrator complex, INTS3 is involved in the post-termination step: INTS3 binds INTS7 in the open conformation of integrator complex and prevents the rebinding of Pol II to the integrator after termination cycle. Mediates recruitment of cytoplasmic dynein to the nuclear envelope, probably as component of the integrator complex. Functionally, component of the SOSS complex, a multiprotein complex that functions downstream of the MRN complex to promote DNA repair and G2/M checkpoint. The SOSS complex associates with single-stranded DNA at DNA lesions and influences diverse endpoints in the cellular DNA damage response including cell-cycle checkpoint activation, recombinational repair and maintenance of genomic stability. The SOSS complex is required for efficient homologous recombination-dependent repair of double-strand breaks (DSBs) and ATM-dependent signaling pathways. In the SOSS complex, it is required for the assembly of the complex and for stabilization of the complex at DNA damage sites. This chain is Integrator complex subunit 3 (INTS3), found in Pongo abelii (Sumatran orangutan).